A 430-amino-acid chain; its full sequence is Adenylosuccinate synthetase (430 aa).

GTP-binding positions include Gly12 to Lys18 and Gly40 to Thr42. Asp13 acts as the Proton acceptor in catalysis. Mg(2+)-binding residues include Asp13 and Gly40. Residues Asp13–Lys16, Asn38–His41, Thr130, Arg144, Gln224, Thr239, and Arg303 each bind IMP. His41 (proton donor) is an active-site residue. Substrate is bound at residue Thr299–Arg305. Residues Arg305, Lys331–Asp333, and Ser413–Ser415 each bind GTP.

Belongs to the adenylosuccinate synthetase family. Homodimer. Mg(2+) is required as a cofactor.

It localises to the cytoplasm. The catalysed reaction is IMP + L-aspartate + GTP = N(6)-(1,2-dicarboxyethyl)-AMP + GDP + phosphate + 2 H(+). It functions in the pathway purine metabolism; AMP biosynthesis via de novo pathway; AMP from IMP: step 1/2. Functionally, plays an important role in the de novo pathway of purine nucleotide biosynthesis. Catalyzes the first committed step in the biosynthesis of AMP from IMP. The sequence is that of Adenylosuccinate synthetase from Parvibaculum lavamentivorans (strain DS-1 / DSM 13023 / NCIMB 13966).